Reading from the N-terminus, the 324-residue chain is tRNA U34 carboxymethyltransferase (324 aa).

Carboxy-S-adenosyl-L-methionine contacts are provided by residues lysine 91, tryptophan 105, lysine 110, glycine 130, 152-154 (DPS), 181-182 (IE), methionine 196, tyrosine 200, and arginine 315.

It belongs to the class I-like SAM-binding methyltransferase superfamily. CmoB family. As to quaternary structure, homotetramer.

It carries out the reaction carboxy-S-adenosyl-L-methionine + 5-hydroxyuridine(34) in tRNA = 5-carboxymethoxyuridine(34) in tRNA + S-adenosyl-L-homocysteine + H(+). Catalyzes carboxymethyl transfer from carboxy-S-adenosyl-L-methionine (Cx-SAM) to 5-hydroxyuridine (ho5U) to form 5-carboxymethoxyuridine (cmo5U) at position 34 in tRNAs. This is tRNA U34 carboxymethyltransferase from Aliivibrio fischeri (strain ATCC 700601 / ES114) (Vibrio fischeri).